A 488-amino-acid polypeptide reads, in one-letter code: MAETSLLEAGASAASTAAALENLQVEASCSVCLEYLKEPVIIECGHNFCKACITRWWEDLERDFPCPVCRKTSRYRSLRPNRQLGSMVEIAKQLQTVKRKIRDESLCSQHHEPLSLFCYEDQEAVCLICAISHTHRAHTVVPMDDATQEYKEKLQKCLEPLEQKLQEITCCKASEERKPGELKRLVESRRQQILKEFEELHRRLDEEQQTLLSRLEEEEQDILQRLRENAAHLGDRRRDLAHLAAEVEGKCLQSGFEMLKDVKSTLEKCEKVKTMEVTSVSIELEKNFSHFPRQYFALRKILKQLIADVTLDPETAHPNLVLSEDRKSVKFVETRLRDLPDTPQRFTFYPCVLATEGFTSGRHYWEVEVGDKTHWAVGVCRDSVSRKGELTPLPETGYWRVRLWNGDKYAATTTPFTPLHIKVKPKRVGIFLDYEAGTLSFYNVTDRSHIYTFTDTFTEKLWPLFYPGIRAGRKNAAPLTIRPPTDWE.

The RING-type zinc finger occupies 29–70 (CSVCLEYLKEPVIIECGHNFCKACITRWWEDLERDFPCPVCR). Residues 102–143 (RDESLCSQHHEPLSLFCYEDQEAVCLICAISHTHRAHTVVPM) form a B box-type zinc finger. Residues C107, H110, C129, and H135 each coordinate Zn(2+). Residues 181-250 (ELKRLVESRR…AHLAAEVEGK (70 aa)) are a coiled coil. 2 interaction with CDKN1A regions span residues 268 to 307 (KCEK…QLIA) and 359 to 488 (TSGR…TDWE). The region spanning 289–484 (SHFPRQYFAL…NAAPLTIRPP (196 aa)) is the B30.2/SPRY domain.

This sequence belongs to the TRIM/RBCC family. As to quaternary structure, interacts with MOAP1. Interacts with CDKN1A. Autoubiquitinated.

It localises to the cytoplasm. It is found in the cytosol. Its subcellular location is the mitochondrion. The protein localises to the nucleus. The enzyme catalyses S-ubiquitinyl-[E2 ubiquitin-conjugating enzyme]-L-cysteine + [acceptor protein]-L-lysine = [E2 ubiquitin-conjugating enzyme]-L-cysteine + N(6)-ubiquitinyl-[acceptor protein]-L-lysine.. It participates in protein modification; protein ubiquitination. E3 ubiquitin-protein ligase. May facilitate apoptosis by inhibiting APC/C-Cdh1-mediated poly-ubiquitination and subsequent proteasome-mediated degradation of the pro-apoptotic protein MOAP1. Regulates the G1/S transition of the cell cycle and DNA damage-induced G2 arrest by stabilizing CDKN1A/p21. Positively regulates CDKN1A/p21 stability by competing with DTL for CDKN1A/p21 binding, therefore disrupting DCX(DTL) E3 ubiquitin ligase complex-mediated CDKN1A/p21 ubiquitination and degradation. This is E3 ubiquitin-protein ligase TRIM39 (Trim39) from Rattus norvegicus (Rat).